The sequence spans 370 residues: Chorismate synthase (370 aa).

The segment at 41–60 (IQGDLDRRKPGTSRHVTQRK) is disordered. NADP(+)-binding residues include Arg48 and Arg54. FMN-binding positions include 125–127 (RSS), 238–239 (NA), Gly278, 293–297 (KPTSS), and Arg319.

Belongs to the chorismate synthase family. In terms of assembly, homotetramer. Requires FMNH2 as cofactor.

It carries out the reaction 5-O-(1-carboxyvinyl)-3-phosphoshikimate = chorismate + phosphate. It functions in the pathway metabolic intermediate biosynthesis; chorismate biosynthesis; chorismate from D-erythrose 4-phosphate and phosphoenolpyruvate: step 7/7. In terms of biological role, catalyzes the anti-1,4-elimination of the C-3 phosphate and the C-6 proR hydrogen from 5-enolpyruvylshikimate-3-phosphate (EPSP) to yield chorismate, which is the branch point compound that serves as the starting substrate for the three terminal pathways of aromatic amino acid biosynthesis. This reaction introduces a second double bond into the aromatic ring system. In Cupriavidus pinatubonensis (strain JMP 134 / LMG 1197) (Cupriavidus necator (strain JMP 134)), this protein is Chorismate synthase.